Consider the following 1207-residue polypeptide: DNA-directed RNA polymerase subunit beta' (1207 aa).

Zn(2+)-binding residues include C60, C62, C75, and C78. Mg(2+) is bound by residues D449, D451, and D453. Zn(2+) contacts are provided by C822, C896, C903, and C906.

The protein belongs to the RNA polymerase beta' chain family. The RNAP catalytic core consists of 2 alpha, 1 beta, 1 beta' and 1 omega subunit. When a sigma factor is associated with the core the holoenzyme is formed, which can initiate transcription. It depends on Mg(2+) as a cofactor. The cofactor is Zn(2+).

The enzyme catalyses RNA(n) + a ribonucleoside 5'-triphosphate = RNA(n+1) + diphosphate. In terms of biological role, DNA-dependent RNA polymerase catalyzes the transcription of DNA into RNA using the four ribonucleoside triphosphates as substrates. The chain is DNA-directed RNA polymerase subunit beta' from Staphylococcus aureus (strain NCTC 8325 / PS 47).